The chain runs to 508 residues: Photosystem II CP47 reaction center protein (508 aa).

The next 6 helical transmembrane spans lie at 21–36, 101–115, 140–156, 203–218, 237–252, and 457–472; these read AVHL…WAGS, IVLS…IWHW, GIHL…FGAF, IAAG…FHLC, VLSS…AFVV, and CFAL…HGAR.

This sequence belongs to the PsbB/PsbC family. PsbB subfamily. PSII is composed of 1 copy each of membrane proteins PsbA, PsbB, PsbC, PsbD, PsbE, PsbF, PsbH, PsbI, PsbJ, PsbK, PsbL, PsbM, PsbT, PsbX, PsbY, PsbZ, Psb30/Ycf12, at least 3 peripheral proteins of the oxygen-evolving complex and a large number of cofactors. It forms dimeric complexes. Binds multiple chlorophylls. PSII binds additional chlorophylls, carotenoids and specific lipids. is required as a cofactor.

The protein resides in the plastid. The protein localises to the chloroplast thylakoid membrane. In terms of biological role, one of the components of the core complex of photosystem II (PSII). It binds chlorophyll and helps catalyze the primary light-induced photochemical processes of PSII. PSII is a light-driven water:plastoquinone oxidoreductase, using light energy to abstract electrons from H(2)O, generating O(2) and a proton gradient subsequently used for ATP formation. The protein is Photosystem II CP47 reaction center protein of Chlorella vulgaris (Green alga).